We begin with the raw amino-acid sequence, 374 residues long: Beta-lytic metalloendopeptidase (374 aa).

The first 24 residues, 1 to 24 (MKKISKAGLGLALVCALATIGGNA), serve as a signal peptide directing secretion. Positions 25-195 (ARRATAQRRG…RQGRPGRAAV (171 aa)) are excised as a propeptide. Positions 128-187 (PTRQGAGDAGPRQSAAGAVRAFRRQRAGGRAARRRRVPAGLRPPVQRTAPGQGGFGPLRQ) are disordered. A compositionally biased stretch (basic residues) spans 148-164 (AFRRQRAGGRAARRRRV). C261 and C307 are oxidised to a cystine. H316 and H318 together coordinate Zn(2+). Residues C351 and C364 are joined by a disulfide bond.

The protein belongs to the peptidase M23A family. The cofactor is Zn(2+).

Its subcellular location is the secreted. The catalysed reaction is Cleavage of N-acetylmuramoyl-|-Ala, and of the insulin B chain at 23-Gly-|-Phe-24 &gt; 18-Val-|-Cys(SO3H).. The chain is Beta-lytic metalloendopeptidase from Achromobacter lyticus.